Consider the following 166-residue polypeptide: Cytochrome P450 regulator dap1 (166 aa).

Residues 4 to 21 (TQVVFIVTLFLYLLITRW) traverse the membrane as a helical segment. The Cytochrome b5 heme-binding domain occupies 42 to 145 (DYTPAELKEY…QKYQAVGRLI (104 aa)). Phosphoserine is present on S108. Position 138 (Y138) interacts with heme.

It belongs to the cytochrome b5 family. MAPR subfamily. As to quaternary structure, interacts with erg5 and erg11.

It is found in the endoplasmic reticulum. Its subcellular location is the membrane. Its function is as follows. Required for sterol biosynthesis. Functions as a positive regulator of cytochrome P450 enzymes erg5 and erg11. Function requires bound heme. This Schizosaccharomyces pombe (strain 972 / ATCC 24843) (Fission yeast) protein is Cytochrome P450 regulator dap1 (dap1).